Consider the following 405-residue polypeptide: Glucose-1-phosphate adenylyltransferase (405 aa).

Alpha-D-glucose 1-phosphate-binding positions include tyrosine 99, glycine 164, 179–180, and serine 197; that span reads EK.

This sequence belongs to the bacterial/plant glucose-1-phosphate adenylyltransferase family. Homotetramer.

The enzyme catalyses alpha-D-glucose 1-phosphate + ATP + H(+) = ADP-alpha-D-glucose + diphosphate. It participates in glycan biosynthesis; glycogen biosynthesis. Involved in the biosynthesis of ADP-glucose, a building block required for the elongation reactions to produce glycogen. Catalyzes the reaction between ATP and alpha-D-glucose 1-phosphate (G1P) to produce pyrophosphate and ADP-Glc. This Corynebacterium aurimucosum (strain ATCC 700975 / DSM 44827 / CIP 107346 / CN-1) (Corynebacterium nigricans) protein is Glucose-1-phosphate adenylyltransferase.